The chain runs to 91 residues: Small ribosomal subunit protein uS19 (91 aa).

It belongs to the universal ribosomal protein uS19 family.

In terms of biological role, protein S19 forms a complex with S13 that binds strongly to the 16S ribosomal RNA. The sequence is that of Small ribosomal subunit protein uS19 (rpsS) from Mycoplasmopsis pulmonis (strain UAB CTIP) (Mycoplasma pulmonis).